Reading from the N-terminus, the 586-residue chain is MDYLKTVVPSQLMAERGANLVVINPGSSNVRIGFASQDVPFNIPHCIARHITQRKDDTPRLSVRDKMLNCHATPSQNAERERAYDIIASLLKIPFLDEEMPSANQALPPKMGRVDALSSQQNKDDSKFTWTDVMDRSIKSSTPIVDKDADVDPLQRSTPDDTEPNSEENMYKEIIFGEDALKIPPSESYCLSHPIRRGHFNISQDYSLHQVLEDLRTIWNWILTEKLHINPRDRHLYSAILVLGETFDNREIKEMLSIVLCDLGFSTAVIHQEALAAAFGNGLSTSCVVNIGAQVTQVVCVEDGVALPHTALALPYGGDDISRCLLWVQRRHRTWPNFQTDPVNRPIDMLMLNKLKESYSQIRSGSFDAVSVVHSYEHEKSVGHQKTKLSALNVPPMGLLYPRVLVPEEYPPPPRSWFQDYDDMLEDTWQTSDSLYSSGNGGFGMWDNYPMFPTRLKKFDNIGLVEAIVSSILSTGRIELQRKLFCSIQLVGGTASTAGLAPVLEQRVLNTIPSNQPIEKAEVLQSRSYPLFVPWKGGVILGVLDIGRDAWIHREDWAKNGVHIGSGRKYRDSYFLQAQAMCYYNS.

The tract at residues Ser-141–Asn-169 is disordered.

The protein belongs to the actin family. ARP8 subfamily.

The chain is Actin-related protein 9 (ARP9) from Oryza sativa subsp. indica (Rice).